A 450-amino-acid chain; its full sequence is Tubulin alpha chain (450 aa).

Residues Gln-11, Glu-71, Ser-140, Gly-144, Thr-145, Thr-179, Asn-206, and Asn-228 each contribute to the GTP site. Glu-71 is a binding site for Mg(2+). The active site involves Glu-254.

Belongs to the tubulin family. In terms of assembly, dimer of alpha and beta chains. A typical microtubule is a hollow water-filled tube with an outer diameter of 25 nm and an inner diameter of 15 nM. Alpha-beta heterodimers associate head-to-tail to form protofilaments running lengthwise along the microtubule wall with the beta-tubulin subunit facing the microtubule plus end conferring a structural polarity. Microtubules usually have 13 protofilaments but different protofilament numbers can be found in some organisms and specialized cells. The cofactor is Mg(2+).

Its subcellular location is the cytoplasm. It is found in the cytoskeleton. The enzyme catalyses GTP + H2O = GDP + phosphate + H(+). In terms of biological role, tubulin is the major constituent of microtubules, a cylinder consisting of laterally associated linear protofilaments composed of alpha- and beta-tubulin heterodimers. Microtubules grow by the addition of GTP-tubulin dimers to the microtubule end, where a stabilizing cap forms. Below the cap, tubulin dimers are in GDP-bound state, owing to GTPase activity of alpha-tubulin. This is Tubulin alpha chain from Zymoseptoria tritici (Speckled leaf blotch fungus).